We begin with the raw amino-acid sequence, 472 residues long: Tryptophanase (472 aa).

K270 carries the N6-(pyridoxal phosphate)lysine modification.

It belongs to the beta-eliminating lyase family. As to quaternary structure, homotetramer. Pyridoxal 5'-phosphate serves as cofactor.

It carries out the reaction L-tryptophan + H2O = indole + pyruvate + NH4(+). Its pathway is amino-acid degradation; L-tryptophan degradation via pyruvate pathway; indole and pyruvate from L-tryptophan: step 1/1. This Haemophilus influenzae protein is Tryptophanase (tnaA).